The primary structure comprises 609 residues: Mitochondrial nucleoid-associated protein 1 (609 aa).

Topologically, residues 1–552 (MSDNPPRMEV…IRCNTTIRKS (552 aa)) are mitochondrial matrix. Disordered stretches follow at residues 142–168 (ASEK…NPSE), 183–202 (SNQD…TTSG), and 410–441 (QLSL…HTPQ). The segment covering 146–161 (TSPKRELAKDLPKSGE) has biased composition (basic and acidic residues). The span at 418–441 (DSQFQASHTGCQSPLCSAQRHTPQ) shows a compositional bias: polar residues. A helical transmembrane segment spans residues 553–573 (GFGGITMLFTGYFVLCCSWSF). At 574–609 (RRLKKLCRPLPWKSTVPPCIGVAKTTGDCRSKTCLD) the chain is on the mitochondrial intermembrane side.

Its subcellular location is the mitochondrion inner membrane. It is found in the mitochondrion matrix. The protein localises to the mitochondrion nucleoid. In terms of biological role, critical regulator of mitochondrial DNA (mtDNA) abundance. Binds dsDNA throughout the mitochondrial genome without sequence specificity and controls mtDNA copy number by promoting its replication. Also plays important roles in mitochondrial metabolism and cell proliferation. The polypeptide is Mitochondrial nucleoid-associated protein 1 (Homo sapiens (Human)).